A 305-amino-acid chain; its full sequence is CRISPR-associated endonuclease Cas1 (305 aa).

The sufficient for cleavage of ssRNA, ssDNA and Holliday junction DNA stretch occupies residues 96–278 (SDKLLYQAKL…EDVLAAGEIQ (183 aa)). Residues Glu-141, His-208, and Asp-221 each coordinate Mg(2+). Residues 278 to 305 (QPPAPPEDAQPVAIPLPVSLGDAGHRSS) are disordered.

This sequence belongs to the CRISPR-associated endonuclease Cas1 family. In terms of assembly, homodimer. Part of the Cas1-Cas2 complex. Interacts with RecB, RecC, RuvB, CasC and CasE. Forms a hexamer with 2 Cas1 dimers sandwiching a Cas2 dimer. The DNA lies across a flat surface extending from 1 Cas1 dimer, across the Cas2 dimer and contacting the other Cas1 dimer. Only 1 Cas1 protein from each dimer is catalytic, the other interacts with the Cas2 dimer and possibly target DNA. The cofactor is Mg(2+).

The protein localises to the cytoplasm. Nuclease activity partially inhibited by CasE. CRISPR (clustered regularly interspaced short palindromic repeat), is an adaptive immune system that provides protection against mobile genetic elements (viruses, transposable elements and conjugative plasmids). CRISPR clusters contain sequences complementary to antecedent mobile elements and target invading nucleic acids. CRISPR clusters are transcribed and processed into CRISPR RNA (crRNA). The Cas1-Cas2 complex is involved in CRISPR adaptation, the first stage of CRISPR immunity, being required for the addition/removal of CRISPR spacers at the leader end of the CRISPR locus. The Cas1-Cas2 complex introduces staggered nicks into both strands of the CRISPR array near the leader repeat and joins the 5'-ends of the repeat strands with the 3'-ends of the new spacer sequence. Spacer DNA integration requires supercoiled target DNA and 3'-OH ends on the inserted (spacer) DNA and probably initiates with a nucleophilic attack of the C 3'-OH end of the protospacer on the minus strand of the first repeat sequence. Expression of Cas1-Cas2 in a strain lacking both genes permits spacer acquisition. Non-specifically binds DNA; the Cas1-Cas2 complex preferentially binds CRISPR-locus DNA. Highest binding is seen to a dual forked DNA complex with 3'-overhangs and a protospacer-adjacent motif-complement specifically positioned. The protospacer DNA lies across a flat surface extending from 1 Cas1 dimer, across the Cas2 dimer and contacting the other Cas1 dimer; the 23 bp-long ds section of the DNA is bracketed by 1 Tyr-22 from each of the Cas1 dimers. Cas1 cuts within the 3'-overhang, to generate a 33-nucleotide DNA that is probably incorporated into the CRISPR leader by a cut-and-paste mechanism. Cas1 alone endonucleolytically cleaves linear ssRNA, ssDNA and short (34 base) dsDNA as well as branched DNA substrates such as Holliday junctions, replication forks and 5'-flap DNA substrates. In vitro catalyzes a concerted transesterification reaction on branched DNA, as would be expected during integration of protospacers into the CRISPR leader sequence; Cas2 is not required in vitro. This reaction requires a 3'-OH group at the branch point. Genetic interactions suggest Cas1 interacts with components of the RecBC and RuvB DNA repair systems. The polypeptide is CRISPR-associated endonuclease Cas1 (ygbT) (Escherichia coli (strain K12)).